Reading from the N-terminus, the 112-residue chain is Small ribosomal subunit protein bS6 (112 aa).

Belongs to the bacterial ribosomal protein bS6 family.

Functionally, binds together with bS18 to 16S ribosomal RNA. The protein is Small ribosomal subunit protein bS6 of Chlamydia trachomatis serovar L2 (strain ATCC VR-902B / DSM 19102 / 434/Bu).